A 172-amino-acid polypeptide reads, in one-letter code: Disulfide bond formation protein B (172 aa).

The Cytoplasmic segment spans residues 1–11 (MNPFRWSFRAQ). The helical transmembrane segment at 12 to 28 (FLLGFLACAGLLAYAIY) threads the bilayer. Topologically, residues 29 to 46 (VQLHLGLEPCPLCIFQRI) are periplasmic. C38 and C41 are oxidised to a cystine. The helical transmembrane segment at 47–63 (AFAALAMFFLLGALHGP) threads the bilayer. Over 64-70 (RAAAGRK) the chain is Cytoplasmic. A helical transmembrane segment spans residues 71-88 (VYGVLSFIAAGVGMGIAA). Topologically, residues 89-145 (RHVWVQIRPKDMMSSCGPPLSFLSETMGPFEVFRTVLTGTGDCGNIDWRFLGLSMPM) are periplasmic. A disulfide bridge connects residues C104 and C131. Residues 146 to 164 (WSMVWFVGLALWALYAGFK) form a helical membrane-spanning segment. Residues 165 to 172 (ARRSSVHH) are Cytoplasmic-facing.

The protein belongs to the DsbB family.

The protein resides in the cell inner membrane. In terms of biological role, required for disulfide bond formation in some periplasmic proteins. Acts by oxidizing the DsbA protein. The sequence is that of Disulfide bond formation protein B from Xanthomonas euvesicatoria pv. vesicatoria (strain 85-10) (Xanthomonas campestris pv. vesicatoria).